The chain runs to 517 residues: Amidophosphoribosyltransferase (517 aa).

Position 1 is an N-acetylmethionine (methionine 1). Positions 1-11 (MELEELGIREE) are excised as a propeptide. Cysteine 12 acts as the Nucleophile in catalysis. A Glutamine amidotransferase type-2 domain is found at 12-261 (CGVFGCIASG…PGEIVEISRH (250 aa)). Cysteine 280 is a binding site for [4Fe-4S] cluster. Mg(2+) is bound by residues serine 327, aspartate 389, and aspartate 390. [4Fe-4S] cluster contacts are provided by cysteine 426, cysteine 503, and cysteine 506.

The protein in the C-terminal section; belongs to the purine/pyrimidine phosphoribosyltransferase family. Homotetramer. Mg(2+) serves as cofactor. Requires [4Fe-4S] cluster as cofactor.

The catalysed reaction is 5-phospho-beta-D-ribosylamine + L-glutamate + diphosphate = 5-phospho-alpha-D-ribose 1-diphosphate + L-glutamine + H2O. It functions in the pathway purine metabolism; IMP biosynthesis via de novo pathway; N(1)-(5-phospho-D-ribosyl)glycinamide from 5-phospho-alpha-D-ribose 1-diphosphate: step 1/2. Functionally, catalyzes the formation of phosphoribosylamine from phosphoribosylpyrophosphate (PRPP) and glutamine. The sequence is that of Amidophosphoribosyltransferase from Mus musculus (Mouse).